A 90-amino-acid chain; its full sequence is Co-chaperonin GroES (90 aa).

The protein belongs to the GroES chaperonin family. As to quaternary structure, heptamer of 7 subunits arranged in a ring. Interacts with the chaperonin GroEL.

The protein resides in the cytoplasm. Functionally, together with the chaperonin GroEL, plays an essential role in assisting protein folding. The GroEL-GroES system forms a nano-cage that allows encapsulation of the non-native substrate proteins and provides a physical environment optimized to promote and accelerate protein folding. GroES binds to the apical surface of the GroEL ring, thereby capping the opening of the GroEL channel. The protein is Co-chaperonin GroES of Borreliella afzelii (strain PKo) (Borrelia afzelii).